The sequence spans 303 residues: Pantothenate synthetase (303 aa).

Residue 30–37 coordinates ATP; that stretch reads MGYLHAGH. H37 (proton donor) is an active-site residue. Q61 is a (R)-pantoate binding site. Q61 contacts beta-alanine. 147 to 150 is a binding site for ATP; sequence GAKD. (R)-pantoate is bound at residue Q153. ATP contacts are provided by residues V176 and 184–187; that span reads LSSR.

This sequence belongs to the pantothenate synthetase family. Homodimer.

It localises to the cytoplasm. The catalysed reaction is (R)-pantoate + beta-alanine + ATP = (R)-pantothenate + AMP + diphosphate + H(+). The protein operates within cofactor biosynthesis; (R)-pantothenate biosynthesis; (R)-pantothenate from (R)-pantoate and beta-alanine: step 1/1. Catalyzes the condensation of pantoate with beta-alanine in an ATP-dependent reaction via a pantoyl-adenylate intermediate. The protein is Pantothenate synthetase of Rhizobium johnstonii (strain DSM 114642 / LMG 32736 / 3841) (Rhizobium leguminosarum bv. viciae).